Reading from the N-terminus, the 212-residue chain is MEAKTLGIATPRKPVLSVSARKLKDNAADWHNLILKWDSLSDKGFTTASSIANLKVSLLSKEKVELESSSPASMEEEEKTNLDYDKGLEALCEELQAILDGLTKIQMKMEKLSSTTKGICELENYHYREESSRPPLFHTWPTAFFYEVSRRLSEAYKKELLLKHTIGAELAHTADRNLSLTYLSMWLHQPYIESNSKLQLESMLLETGHRAL.

An N-acetylmethionine modification is found at Met1. 2 positions are modified to phosphoserine: Ser69 and Ser73. The stretch at 73 to 107 (SMEEEEKTNLDYDKGLEALCEELQAILDGLTKIQM) forms a coiled coil.

This sequence belongs to the CINP family. In terms of assembly, homodimer. Part of the 55LCC heterohexameric ATPase complex composed at least of AIRIM, AFG2A, AFG2B and CINP. Interacts with AIRIM. Interacts with CDK2 and CDC7. Interacts with the components of the replication complex, MCM2, MCM3, MCM4, MCM5, MCM6, MCM7 and with ORC2-containing complexes. Interacts with ATRIP. Interacts with CEP152. Associates with pre-60S ribosomal particles. Post-translationally, phosphorylated by CDC7 but not by CDK2.

The protein localises to the nucleus. Component of the DNA replication complex, which interacts with two kinases, CDK2 and CDC7, thereby providing a functional and physical link between CDK2 and CDC7 during firing of the origins of replication. Regulates ATR-mediated checkpoint signaling in response to DNA damage. Part of the 55LCC heterohexameric ATPase complex which is chromatin-associated and promotes replisome proteostasis to maintain replication fork progression and genome stability. Required for replication fork progression, sister chromatid cohesion, and chromosome stability. The ATPase activity is specifically enhanced by replication fork DNA and is coupled to cysteine protease-dependent cleavage of replisome substrates in response to replication fork damage. Uses ATPase activity to process replisome substrates in S-phase, facilitating their proteolytic turnover from chromatin to ensure DNA replication and mitotic fidelity. As part of 55LCC complex, also involved in the cytoplasmic maturation steps of pre-60S ribosomal particles by promoting the release of shuttling protein RSL24D1/RLP24 from the pre-ribosomal particles. In Mus musculus (Mouse), this protein is Cyclin-dependent kinase 2-interacting protein (Cinp).